The chain runs to 576 residues: MAGUK p55 subfamily member 7 (576 aa).

2 L27 domains span residues 10–64 (CDMG…EKQN) and 65–122 (PLPI…YDPV). One can recognise a PDZ domain in the interval 139–220 (IIRLVKNSEP…AITFKIIPST (82 aa)). The SH3 domain maps to 228–298 (EGKIFIKALF…PSKHFQERRL (71 aa)). The interval 289 to 383 (PSKHFQERRL…VGPVGVGLNE (95 aa)) is phospho-regulated basic and hydrophobic (PRBH) motif. The 193-residue stretch at 368–560 (YRLIVLVGPV…AFNELKTTFD (193 aa)) folds into the Guanylate kinase-like domain. Ser409 bears the Phosphoserine mark.

It belongs to the MAGUK family. Heterodimer; able to heterodimerize via its C-terminal L27 domain with LIN7A, LIN7B and LIN7C. Forms a tripartite complex composed of DLG1, MPP7 and LIN7 (LIN7A or LIN7C). Interacts with DLG1 via its N-terminal L27 domain. Interacts with PALS1 and PATJ. Phosphorylated by aPKC which promotes dissociation from the cell cortex.

It localises to the membrane. Its subcellular location is the lateral cell membrane. The protein localises to the cell junction. The protein resides in the tight junction. It is found in the adherens junction. It localises to the cytoplasm. Its subcellular location is the cell cortex. Functionally, acts as an important adapter that promotes epithelial cell polarity and tight junction formation via its interaction with DLG1. Involved in the assembly of protein complexes at sites of cell-cell contact. This Mus musculus (Mouse) protein is MAGUK p55 subfamily member 7 (Mpp7).